A 507-amino-acid polypeptide reads, in one-letter code: Putative pentatricopeptide repeat-containing protein At3g16710, mitochondrial (507 aa).

Residues 1-48 constitute a mitochondrion transit peptide; that stretch reads MRRSIATGFASIVKGFHLHSHRHRLQISNPRTAASLSLCGFCFWIRAF. PPR repeat units lie at residues 47–81, 82–116, 117–151, 152–186, 187–221, 222–256, 257–291, 292–326, 327–361, 362–396, 397–431, 432–466, and 467–501; these read AFSS…RPLP, SIID…GIPP, LLCT…GFEP, DLVT…GFKP, NVVT…GSRP, NVVT…RIEP, NVIT…SVYP, DVFT…GCYP, NEVI…GVVA, NTIT…RAPP, DIRT…EMDI, NIVT…GMKP, and NVIT…GFLP.

This sequence belongs to the PPR family. P subfamily.

It localises to the mitochondrion. This is Putative pentatricopeptide repeat-containing protein At3g16710, mitochondrial from Arabidopsis thaliana (Mouse-ear cress).